Here is a 223-residue protein sequence, read N- to C-terminus: MGSNKIKNLVQYEIQDFVSLNKMDTKSHDSLNLNVSKKSRYLLHRVLTNQLINNRSGNACTKTRSEVEGGGKKPWKQKGTGNARAGSSNSPLWKGGGVTFGPKPRTFSNKTNKKERLLALTTALYLKSNNTKVINLDNLDFTNLKTRDLVIKCSNLIENYKKDQKILFVAEPTASGLWRYVKNISNVDLIYTTGLDLKKILQAHHIIFTCKALNDVKEVFNEQ.

Residues 61-96 (TKTRSEVEGGGKKPWKQKGTGNARAGSSNSPLWKGG) are disordered.

This sequence belongs to the universal ribosomal protein uL4 family. Part of the 50S ribosomal subunit.

The protein localises to the plastid. It is found in the chloroplast. Its function is as follows. Probably binds the 23S rRNA. This is Large ribosomal subunit protein uL4c (rpl4) from Guillardia theta (Cryptophyte).